The primary structure comprises 154 residues: Lipoprotein signal peptidase (154 aa).

The next 3 helical transmembrane spans lie at 8 to 28, 58 to 78, and 88 to 108; these read LYLI…NYIV, IFSG…AVVI, and NGLF…NFID. Catalysis depends on residues Asp-117 and Asp-133. Residues 131-151 traverse the membrane as a helical segment; the sequence is IADSAITVGIILVFIYLIFIS.

Belongs to the peptidase A8 family.

It localises to the cell membrane. The catalysed reaction is Release of signal peptides from bacterial membrane prolipoproteins. Hydrolyzes -Xaa-Yaa-Zaa-|-(S,diacylglyceryl)Cys-, in which Xaa is hydrophobic (preferably Leu), and Yaa (Ala or Ser) and Zaa (Gly or Ala) have small, neutral side chains.. Its pathway is protein modification; lipoprotein biosynthesis (signal peptide cleavage). Functionally, this protein specifically catalyzes the removal of signal peptides from prolipoproteins. The polypeptide is Lipoprotein signal peptidase (Lactobacillus johnsonii (strain CNCM I-12250 / La1 / NCC 533)).